The primary structure comprises 451 residues: Pre-mRNA-splicing factor PRP46 (451 aa).

7 WD repeats span residues 137-168, 180-210, 222-252, 264-294, 306-335, 348-377, and 397-427; these read GHLG…KVWD, GHVM…KCWD, GHLS…KLWD, GHKG…RLWD, HHKR…RSWG, EKTG…SFYD, and EGER…KIWK.

It belongs to the WD repeat PRL1/PRL2 family. As to quaternary structure, belongs to the CWC complex (or CEF1-associated complex), a spliceosome subcomplex composed of the U2, U5 and U6 snRNAs and at least BUD13, BUD31, BRR2, CDC40, CEF1, CLF1, CUS1, CWC2, CWC15, CWC21, CWC22, CWC23, CWC24, CWC25, CWC27, ECM2, HSH155, IST3, ISY1, LEA1, MSL1, NTC20, PRP8, PRP9, PRP11, PRP19, PRP21, PRP22, PRP45, PRP46, SLU7, SMB1, SMD1, SMD2, SMD3, SMX2, SMX3, SNT309, SNU114, SPP2, SYF1, SYF2, RSE1 and YJU2. Interacts with CEF1, CLF1, NTC20, PRP45 and SYF1.

The protein resides in the cytoplasm. It localises to the nucleus. Functionally, involved in pre-mRNA splicing. May also be required for cell cycle progression at G2/M. The sequence is that of Pre-mRNA-splicing factor PRP46 (PRP46) from Saccharomyces cerevisiae (strain ATCC 204508 / S288c) (Baker's yeast).